The primary structure comprises 146 residues: UPF0742 protein SPAC977.02 (146 aa).

A helical transmembrane segment spans residues 38-60; sequence LTVKYCLAVKLLIYLLYCWYIYS.

This sequence belongs to the UPF0742 family.

It is found in the cytoplasm. It localises to the nucleus membrane. In Schizosaccharomyces pombe (strain 972 / ATCC 24843) (Fission yeast), this protein is UPF0742 protein SPAC977.02.